A 72-amino-acid chain; its full sequence is Aurein-2.5 (72 aa).

Positions 1–22 are cleaved as a signal peptide; that stretch reads MAFLKKSLFLVLFLGLVSLSIC. Residues 23–49 constitute a propeptide that is removed on maturation; it reads EKEKRQNEEDEDENEAANHEEGSEEKR. The segment at 27 to 47 is disordered; the sequence is RQNEEDEDENEAANHEEGSEE. Positions 38–47 are enriched in basic and acidic residues; sequence AANHEEGSEE. Leu-65 carries the leucine amide modification. Positions 69–72 are excised as a propeptide; sequence NDLE.

It belongs to the frog skin active peptide (FSAP) family. Aurein subfamily. May be monomeric or may oligomerize as homodimers or homotrimers in Gram-positive and Gram-negative bacteria mimetic membranes. Post-translationally, C-terminal amidation enhances antibacterial activity. This increase may be due to stabilization of the alpha-helical structure at the membrane interface. In terms of tissue distribution, expressed by the skin dorsal glands.

It is found in the secreted. The protein localises to the target cell membrane. Functionally, amphipathic alpha-helical antimicrobial peptide with moderate to potent activity against Gram-positive bacteria, Gram-negative bacteria and fungi. Also shows a weak activity against biofilm of both Gram-positive and Gram-negative bacteria. Probably acts by disturbing membrane functions with its amphipathic structure. Kills fungi via membranolytic action. Enhanced sterol levels in lipid composition membranes reduce interaction of this peptide with membranes, having a protective effect against the lytic ability of the peptide. Shows anticancer activity. The polypeptide is Aurein-2.5 (Ranoidea aurea (Green and golden bell frog)).